Consider the following 197-residue polypeptide: MADKVLKEKRKLFIHSMGEGTINGLLDELLQTRVLNQEEMEKVKRENATVMDKTRALIDSVIPKGAQACQICITYICEEDSYLAETLGLSAALQAVQDNPAMPTCSSPEGRIKLCFLEDAQRIWKQKLQRCHVQNTIIKWSERYTSGSFEMQWLFLRTNFIERFWRNILLLPLHKGSLYPRIPGLGKELQTGTHKLS.

The CARD domain occupies 1-91 (MADKVLKEKR…YLAETLGLSA (91 aa)).

Homooligomer. Interacts with CASP1, CASP4, CARD8 and RIPK2. Widely expressed. Expressed at higher level in placenta, spleen, lymph node and bone marrow. Weakly or not expressed in thymus.

Its function is as follows. Caspase inhibitor. Acts as a regulator of procaspase-1/CASP1 activation implicated in the regulation of the proteolytic maturation of pro-interleukin-1 beta (IL1B) and its release during inflammation. Inhibits the release of IL1B in response to LPS in monocytes. Also induces NF-kappa-B activation during the pro-inflammatory cytokine response. Also able to inhibit CASP1-mediated neuronal cell death, TNF-alpha, hypoxia-, UV-, and staurosporine-mediated cell death but not ER stress-mediated cell death. Acts by preventing activation of caspases CASP1 and CASP4, possibly by preventing the interaction between CASP1 and RIPK2. This is Caspase recruitment domain-containing protein 16 (CARD16) from Homo sapiens (Human).